A 339-amino-acid chain; its full sequence is Phenylalanine--tRNA ligase alpha subunit (339 aa).

E253 serves as a coordination point for Mg(2+).

This sequence belongs to the class-II aminoacyl-tRNA synthetase family. Phe-tRNA synthetase alpha subunit type 1 subfamily. Tetramer of two alpha and two beta subunits. It depends on Mg(2+) as a cofactor.

Its subcellular location is the cytoplasm. The enzyme catalyses tRNA(Phe) + L-phenylalanine + ATP = L-phenylalanyl-tRNA(Phe) + AMP + diphosphate + H(+). This Thioalkalivibrio sulfidiphilus (strain HL-EbGR7) protein is Phenylalanine--tRNA ligase alpha subunit.